The primary structure comprises 553 residues: Protein Early 65 kDa (553 aa).

It is found in the host cytoplasm. Its function is as follows. May participate in the recruitment of G-actin to the host nucleus. This Autographa californica nuclear polyhedrosis virus (AcMNPV) protein is Protein Early 65 kDa (HE65).